Reading from the N-terminus, the 638-residue chain is Phosphomethylpyrimidine synthase (638 aa).

Substrate is bound by residues Asn233, Met262, Tyr291, His327, 347-349 (SRG), 388-391 (DGLR), and Glu427. His431 is a Zn(2+) binding site. Residue Tyr454 participates in substrate binding. Residue His495 coordinates Zn(2+). [4Fe-4S] cluster contacts are provided by Cys575, Cys578, and Cys583.

The protein belongs to the ThiC family. As to quaternary structure, homodimer. [4Fe-4S] cluster is required as a cofactor.

It carries out the reaction 5-amino-1-(5-phospho-beta-D-ribosyl)imidazole + S-adenosyl-L-methionine = 4-amino-2-methyl-5-(phosphooxymethyl)pyrimidine + CO + 5'-deoxyadenosine + formate + L-methionine + 3 H(+). The protein operates within cofactor biosynthesis; thiamine diphosphate biosynthesis. In terms of biological role, catalyzes the synthesis of the hydroxymethylpyrimidine phosphate (HMP-P) moiety of thiamine from aminoimidazole ribotide (AIR) in a radical S-adenosyl-L-methionine (SAM)-dependent reaction. The chain is Phosphomethylpyrimidine synthase from Saccharophagus degradans (strain 2-40 / ATCC 43961 / DSM 17024).